The primary structure comprises 974 residues: Phosphoenolpyruvate carboxylase 1 (974 aa).

Active-site residues include His-164 and Lys-604.

This sequence belongs to the PEPCase type 1 family. Exists as a homotetramer or heterooligomer. The cofactor is Mg(2+).

It is found in the cytoplasm. The enzyme catalyses oxaloacetate + phosphate = phosphoenolpyruvate + hydrogencarbonate. Activated by glutamine and dihydroxyacetone phosphate. Inhibited by glutamate, aspartate, 2-oxoglutarate and malate. In terms of biological role, through the carboxylation of phosphoenolpyruvate (PEP) it forms oxaloacetate, a four-carbon dicarboxylic acid source for the tricarboxylic acid cycle. The sequence is that of Phosphoenolpyruvate carboxylase 1 from Chlamydomonas reinhardtii (Chlamydomonas smithii).